A 166-amino-acid chain; its full sequence is UPF0561 protein C2orf68 homolog (166 aa).

Basic and acidic residues predominate over residues 36 to 49 (RDDYDKKVKQAAKE). Residues 36–108 (RDDYDKKVKQ…EPEPPGHQLF (73 aa)) form a disordered region.

It belongs to the UPF0561 family.

The protein is UPF0561 protein C2orf68 homolog of Bos taurus (Bovine).